Consider the following 185-residue polypeptide: Orotate phosphoribosyltransferase (185 aa).

5-phospho-alpha-D-ribose 1-diphosphate-binding positions include Arg-98, Lys-99, Lys-102, His-104, and 128–136 (EDVTTTGGS). Orotate contacts are provided by Thr-132 and Arg-160.

The protein belongs to the purine/pyrimidine phosphoribosyltransferase family. PyrE subfamily. In terms of assembly, homodimer. The cofactor is Mg(2+).

The catalysed reaction is orotidine 5'-phosphate + diphosphate = orotate + 5-phospho-alpha-D-ribose 1-diphosphate. The protein operates within pyrimidine metabolism; UMP biosynthesis via de novo pathway; UMP from orotate: step 1/2. Its function is as follows. Catalyzes the transfer of a ribosyl phosphate group from 5-phosphoribose 1-diphosphate to orotate, leading to the formation of orotidine monophosphate (OMP). This is Orotate phosphoribosyltransferase from Bradyrhizobium sp. (strain BTAi1 / ATCC BAA-1182).